The following is a 211-amino-acid chain: HTH-type transcriptional regulator AlkX (211 aa).

One can recognise an HTH tetR-type domain in the interval 22–82; the sequence is ALLRDSVLDA…GYALRLADRL (61 aa). The H-T-H motif DNA-binding region spans 45-64; sequence TLSDVARAAGISRQTIYNEF.

In terms of assembly, homodimer.

The protein localises to the cytoplasm. Its activity is regulated as follows. DNA-binding activity may be regulated by fatty acids. Functionally, represses the expression of the alkB-rubAB operon, which encodes the alkane hydroxylase AlkB and the rubredoxins RubA and RubB. Acts by binding to the promoter region of the operon. In addition, EMSA analysis show that AlkX can bind to the promoter region of mmpS1 and mmpL3 and to the intragenic region of mmpL11, suggesting that it may participate in the regulatory network that controls the expression of MmpL lipid transporters. This Mycobacterium tuberculosis (strain ATCC 25618 / H37Rv) protein is HTH-type transcriptional regulator AlkX.